Reading from the N-terminus, the 356-residue chain is Histidine biosynthesis bifunctional protein HisB (356 aa).

Residues 1-166 are histidinol-phosphatase; sequence MSKKVLFIDR…AICNYLTSLN (166 aa). Aspartate 9 functions as the Nucleophile in the catalytic mechanism. Residues aspartate 9 and aspartate 11 each contribute to the Mg(2+) site. Aspartate 11 serves as the catalytic Proton donor. Residues cysteine 93, histidine 95, cysteine 101, and cysteine 103 each coordinate Zn(2+). Aspartate 130 lines the Mg(2+) pocket. An imidazoleglycerol-phosphate dehydratase region spans residues 167–356; sequence RYAHVKRITK…VLPSSKGVLS (190 aa).

In the N-terminal section; belongs to the histidinol-phosphatase family. It in the C-terminal section; belongs to the imidazoleglycerol-phosphate dehydratase family. Requires Mg(2+) as cofactor. Zn(2+) serves as cofactor.

Its subcellular location is the cytoplasm. It carries out the reaction D-erythro-1-(imidazol-4-yl)glycerol 3-phosphate = 3-(imidazol-4-yl)-2-oxopropyl phosphate + H2O. The enzyme catalyses L-histidinol phosphate + H2O = L-histidinol + phosphate. It functions in the pathway amino-acid biosynthesis; L-histidine biosynthesis; L-histidine from 5-phospho-alpha-D-ribose 1-diphosphate: step 6/9. It participates in amino-acid biosynthesis; L-histidine biosynthesis; L-histidine from 5-phospho-alpha-D-ribose 1-diphosphate: step 8/9. The sequence is that of Histidine biosynthesis bifunctional protein HisB from Baumannia cicadellinicola subsp. Homalodisca coagulata.